Here is a 273-residue protein sequence, read N- to C-terminus: Putative pyruvate, phosphate dikinase regulatory protein (273 aa).

149-156 contacts ADP; that stretch reads GPSRTSKT.

It belongs to the pyruvate, phosphate/water dikinase regulatory protein family. PDRP subfamily.

It carries out the reaction N(tele)-phospho-L-histidyl/L-threonyl-[pyruvate, phosphate dikinase] + ADP = N(tele)-phospho-L-histidyl/O-phospho-L-threonyl-[pyruvate, phosphate dikinase] + AMP + H(+). It catalyses the reaction N(tele)-phospho-L-histidyl/O-phospho-L-threonyl-[pyruvate, phosphate dikinase] + phosphate + H(+) = N(tele)-phospho-L-histidyl/L-threonyl-[pyruvate, phosphate dikinase] + diphosphate. Bifunctional serine/threonine kinase and phosphorylase involved in the regulation of the pyruvate, phosphate dikinase (PPDK) by catalyzing its phosphorylation/dephosphorylation. The protein is Putative pyruvate, phosphate dikinase regulatory protein of Rickettsia typhi (strain ATCC VR-144 / Wilmington).